We begin with the raw amino-acid sequence, 233 residues long: DNA-directed RNA polymerase V subunit 5C (233 aa).

This sequence belongs to the archaeal Rpo5/eukaryotic RPB5 RNA polymerase subunit family. As to quaternary structure, component of the RNA polymerase V complex. As to expression, expressed in flower buds and siliques.

The protein resides in the nucleus. Its function is as follows. DNA-dependent RNA polymerase catalyzes the transcription of DNA into RNA using the four ribonucleoside triphosphates as substrates. Component of RNA polymerase V involved in RNA-directed DNA methylation-dependent (RdDM) silencing of endogenous repeated sequences, including transposable elements. The sequence is that of DNA-directed RNA polymerase V subunit 5C (NRPE5C) from Arabidopsis thaliana (Mouse-ear cress).